The chain runs to 244 residues: Probable ABC transporter ATP-binding protein in ycf23-apcF intergenic region (244 aa).

One can recognise an ABC transporter domain in the interval 9 to 241 (LEINNLTVSY…KLSTLFGEHI (233 aa)). 41-48 (GPNGAGKS) contacts ATP.

This sequence belongs to the ABC transporter superfamily.

It is found in the plastid. The protein localises to the cyanelle. This chain is Probable ABC transporter ATP-binding protein in ycf23-apcF intergenic region, found in Cyanophora paradoxa.